A 328-amino-acid polypeptide reads, in one-letter code: Arabinose 5-phosphate isomerase KdsD (328 aa).

Residues C42–F184 enclose the SIS domain. Residues G75–T76, H82, H88, A114–H123, K148–A150, T222, and D275 each bind substrate. Residue H82 coordinates Zn(2+). The CBS 1 domain maps to M210–V268. One can recognise a CBS 2 domain in the interval M277–V328.

This sequence belongs to the SIS family. GutQ/KpsF subfamily. Homotetramer.

It catalyses the reaction D-arabinose 5-phosphate = D-ribulose 5-phosphate. It participates in carbohydrate biosynthesis; 3-deoxy-D-manno-octulosonate biosynthesis; 3-deoxy-D-manno-octulosonate from D-ribulose 5-phosphate: step 1/3. Its pathway is bacterial outer membrane biogenesis; lipopolysaccharide biosynthesis. Involved in the biosynthesis of 3-deoxy-D-manno-octulosonate (KDO), a unique 8-carbon sugar component of lipopolysaccharides (LPSs). Catalyzes the reversible aldol-ketol isomerization between D-ribulose 5-phosphate (Ru5P) and D-arabinose 5-phosphate (A5P). This Shigella flexneri protein is Arabinose 5-phosphate isomerase KdsD (kdsD).